A 287-amino-acid polypeptide reads, in one-letter code: Undecaprenyl-diphosphatase (287 aa).

The next 7 helical transmembrane spans lie at 6–26 (LYLIKAFFLGIIEGLTEFIPV), 45–65 (SGKVFEVVIQFGSILAVMWIF), 85–105 (AFTRNLLLAFLPAAVVGAIFI), 111–131 (VFYHPGVVAVTLVLGGLIMLW), 204–224 (ATEFSFFLAMPTMLGAATYDL), 238–258 (AIAVGFAAAFISALVVVRAVL), and 265–285 (TYRGFAWYRIALGIVVAAWLM).

It belongs to the UppP family.

The protein localises to the cell inner membrane. The catalysed reaction is di-trans,octa-cis-undecaprenyl diphosphate + H2O = di-trans,octa-cis-undecaprenyl phosphate + phosphate + H(+). Catalyzes the dephosphorylation of undecaprenyl diphosphate (UPP). Confers resistance to bacitracin. The sequence is that of Undecaprenyl-diphosphatase from Bordetella petrii (strain ATCC BAA-461 / DSM 12804 / CCUG 43448).